Here is a 469-residue protein sequence, read N- to C-terminus: 3-isopropylmalate dehydratase large subunit (469 aa).

Residues C349, C410, and C413 each contribute to the [4Fe-4S] cluster site.

This sequence belongs to the aconitase/IPM isomerase family. LeuC type 1 subfamily. As to quaternary structure, heterodimer of LeuC and LeuD. [4Fe-4S] cluster is required as a cofactor.

It carries out the reaction (2R,3S)-3-isopropylmalate = (2S)-2-isopropylmalate. It participates in amino-acid biosynthesis; L-leucine biosynthesis; L-leucine from 3-methyl-2-oxobutanoate: step 2/4. In terms of biological role, catalyzes the isomerization between 2-isopropylmalate and 3-isopropylmalate, via the formation of 2-isopropylmaleate. The polypeptide is 3-isopropylmalate dehydratase large subunit (Neisseria meningitidis serogroup A / serotype 4A (strain DSM 15465 / Z2491)).